Here is a 396-residue protein sequence, read N- to C-terminus: Putative nickel insertion protein (396 aa).

Belongs to the LarC family.

This is Putative nickel insertion protein from Methanosarcina barkeri (strain Fusaro / DSM 804).